A 115-amino-acid polypeptide reads, in one-letter code: Holo-[acyl-carrier-protein] synthase (115 aa).

Mg(2+) contacts are provided by aspartate 6 and glutamate 51.

The protein belongs to the P-Pant transferase superfamily. AcpS family. The cofactor is Mg(2+).

It localises to the cytoplasm. It catalyses the reaction apo-[ACP] + CoA = holo-[ACP] + adenosine 3',5'-bisphosphate + H(+). In terms of biological role, transfers the 4'-phosphopantetheine moiety from coenzyme A to a Ser of acyl-carrier-protein. The protein is Holo-[acyl-carrier-protein] synthase of Campylobacter jejuni subsp. jejuni serotype O:2 (strain ATCC 700819 / NCTC 11168).